Here is a 670-residue protein sequence, read N- to C-terminus: Solute carrier organic anion transporter family member 1A1 (670 aa).

Residues 1–20 (MEETEKKVATQEGRFFSKMK) are Cytoplasmic-facing. A helical transmembrane segment spans residues 21-40 (VFLMSLTCAYLAKSLSGVYM). Residues 41–59 (NSMLTQIERQFGIPTSVVG) lie on the Extracellular side of the membrane. Residues 60–80 (FITGSFEIGNLLLIVFVSYFG) traverse the membrane as a helical segment. Residues 81–86 (RKLHRP) are Cytoplasmic-facing. The helical transmembrane segment at 87 to 111 (IIIGVGCVVMGLGCFLMASPHFLMG) threads the bilayer. Over 112-155 (RYKYETTISPTSNLSSNSFLCIENRTQTLKPTQDPTECVKEIKS) the chain is Extracellular. Residues N124 and N135 are each glycosylated (N-linked (GlcNAc...) asparagine). The chain crosses the membrane as a helical span at residues 156-184 (LMWIYVLIGNTMRGIGETPIMPLGISYIE). Residues 185–203 (DFAKSENSPLYIGILEMGK) lie on the Cytoplasmic side of the membrane. A helical membrane pass occupies residues 204–224 (IVGPIIGLLLGSFFARVYVDI). At 225–242 (GSVNTDDLTITPTDTRWV) the chain is on the extracellular side. The chain crosses the membrane as a helical span at residues 243–267 (GAWWIGFLVCAGVNILTSIPFFFFP). Over 268-311 (KTLPKKELQDNVDVTKYEKVEKHRERAKKENLGITKDFLPFMKS) the chain is Cytoplasmic. The chain crosses the membrane as a helical span at residues 312-333 (LCCNPIYMLFSLTSVLQINGFA). The Extracellular portion of the chain corresponds to 334-353 (STFTFLPKYLEQQYGKSTSE). The helical transmembrane segment at 354 to 377 (AVFLIGVYSLPPVCLGYLISGFIM) threads the bilayer. At 378–381 (KKFK) the chain is on the cytoplasmic side. A helical membrane pass occupies residues 382–405 (ITVKKAAYIAFGLSLSEYFIFLCN). The Extracellular portion of the chain corresponds to 406-513 (YLLTCDNFPV…PECDNKLQYF (108 aa)). The Kazal-like domain maps to 433–488 (KNVLADCNTRCSCLTDTWDPVCGDNGLAYMSACLAGCEKSVGTGTNMVFQNCSCIG). 3 cysteine pairs are disulfide-bonded: C439–C469, C445–C465, and C454–C486. N-linked (GlcNAc...) asparagine glycosylation is found at N483 and N492. Residues 514-536 (LIKSVFSSFIFSLAAIPGYMVLL) traverse the membrane as a helical segment. At 537 to 545 (RCVKSEEKS) the chain is on the cytoplasmic side. A helical membrane pass occupies residues 546–571 (IGVGLHAFFIRLLAGIPAPVYFGALI). Over 572-605 (DRTCLHWGTLKCGQPGACRMYDINRFRHIYLGLP) the chain is Extracellular. Residues 606-623 (AAVRGSSFLPAVFILILM) traverse the membrane as a helical segment. Residues 624–670 (RKFHFPGDIHSPDTELAEMKLTEKESECTDVCRSPKVENDGELKTKL) lie on the Cytoplasmic side of the membrane. S634 carries the post-translational modification Phosphoserine.

The protein belongs to the organo anion transporter (TC 2.A.60) family. In terms of assembly, binds to PDZK1. Interaction with PDZK1 is required for expression on hepatocyte surface. Highly expressed in liver, and at lower levels in kidney. Not detected in other tissues.

It is found in the basolateral cell membrane. It carries out the reaction estrone 3-sulfate(out) + hydrogencarbonate(in) = estrone 3-sulfate(in) + hydrogencarbonate(out). It catalyses the reaction taurocholate(out) + hydrogencarbonate(in) = taurocholate(in) + hydrogencarbonate(out). The enzyme catalyses L-thyroxine(out) = L-thyroxine(in). The catalysed reaction is prostaglandin E2(out) = prostaglandin E2(in). It carries out the reaction 17beta-estradiol 17-O-(beta-D-glucuronate)(out) = 17beta-estradiol 17-O-(beta-D-glucuronate)(in). It catalyses the reaction dehydroepiandrosterone 3-sulfate(out) = dehydroepiandrosterone 3-sulfate(in). Functionally, mediates the Na(+)-independent transport of organic anions such as steroid sulfate conjugates (dehydroepiandrosterone sulfate (DHEAS), 17-beta-glucuronosyl estradiol, estrone-3-sulfate), conjugated (taurocholate) and unconjugated (cholate) bile acids, prostaglandin E2 (PGE2) and L-thyroxine T4. Also capable of transporting sulfobromophthalein (BSP), ouabain and gadoxetate. Hydrogencarbonate/HCO3(-) acts as the probable counteranion that exchanges for organic anions. Shows a pH-sensitive substrate specificity which may be ascribed to the protonation state of the binding site and leads to a stimulation of substrate transport in an acidic microenvironment. The chain is Solute carrier organic anion transporter family member 1A1 from Mus musculus (Mouse).